We begin with the raw amino-acid sequence, 207 residues long: Large ribosomal subunit protein uL4 (207 aa).

Positions 44–71 (RRQGTQSAKTRAEVRGGGRKPWKQKGTG) are disordered. Positions 60-71 (GGRKPWKQKGTG) are enriched in basic residues.

It belongs to the universal ribosomal protein uL4 family. In terms of assembly, part of the 50S ribosomal subunit.

Its function is as follows. One of the primary rRNA binding proteins, this protein initially binds near the 5'-end of the 23S rRNA. It is important during the early stages of 50S assembly. It makes multiple contacts with different domains of the 23S rRNA in the assembled 50S subunit and ribosome. Forms part of the polypeptide exit tunnel. In Alkaliphilus oremlandii (strain OhILAs) (Clostridium oremlandii (strain OhILAs)), this protein is Large ribosomal subunit protein uL4.